The following is a 241-amino-acid chain: Ribosomal RNA small subunit methyltransferase G (241 aa).

S-adenosyl-L-methionine contacts are provided by residues Gly79, Phe84, 130 to 131, and Arg150; that span reads AE.

The protein belongs to the methyltransferase superfamily. RNA methyltransferase RsmG family.

The protein resides in the cytoplasm. In terms of biological role, specifically methylates the N7 position of a guanine in 16S rRNA. The sequence is that of Ribosomal RNA small subunit methyltransferase G from Ligilactobacillus salivarius (strain UCC118) (Lactobacillus salivarius).